Reading from the N-terminus, the 566-residue chain is Amidophosphoribosyltransferase 1, chloroplastic (566 aa).

Over residues 1–13 the composition is skewed to low complexity; the sequence is MAATTSFSSSLSL. Disordered regions lie at residues 1-28 and 58-87; these read MAATTSFSSSLSLITKPNNSSYTNQPLP and VSSYFSSPSPSEDNSHTPFDYHNDEDDEKP. Residues 1–58 constitute a chloroplast transit peptide; the sequence is MAATTSFSSSLSLITKPNNSSYTNQPLPLFPKPFLKPPHLSLLPSPLSSPPPSLIHGV. Residues 15–25 are compositionally biased toward polar residues; that stretch reads TKPNNSSYTNQ. The span at 59-68 shows a compositional bias: low complexity; sequence SSYFSSPSPS. Residues 70 to 87 show a composition bias toward basic and acidic residues; it reads DNSHTPFDYHNDEDDEKP. The active-site Nucleophile is the C91. In terms of domain architecture, Glutamine amidotransferase type-2 spans 91–311; that stretch reads CGVVGIYGDP…PGEVLVVDKD (221 aa). 4 residues coordinate [4Fe-4S] cluster: C327, C473, C524, and C527.

In the C-terminal section; belongs to the purine/pyrimidine phosphoribosyltransferase family. Requires [4Fe-4S] cluster as cofactor. Mg(2+) serves as cofactor. Expressed in flowers and roots. Also present in leaves, and, to a lower extent, in cotyledons.

It is found in the plastid. Its subcellular location is the chloroplast stroma. It catalyses the reaction 5-phospho-beta-D-ribosylamine + L-glutamate + diphosphate = 5-phospho-alpha-D-ribose 1-diphosphate + L-glutamine + H2O. It participates in purine metabolism; IMP biosynthesis via de novo pathway; N(1)-(5-phospho-D-ribosyl)glycinamide from 5-phospho-alpha-D-ribose 1-diphosphate: step 1/2. Functionally, catalyzes the first committed step of 'de novo' purine biosynthesis from glutamine. Involved in plastid biogenesis and cell division. The sequence is that of Amidophosphoribosyltransferase 1, chloroplastic (ASE1) from Arabidopsis thaliana (Mouse-ear cress).